We begin with the raw amino-acid sequence, 231 residues long: 5'-methylthioadenosine/S-adenosylhomocysteine nucleosidase (231 aa).

Glu-12 serves as the catalytic Proton acceptor. Substrate-binding positions include Gly-78, Val-153, and 174–175; that span reads ME. Catalysis depends on Asp-198, which acts as the Proton donor.

It belongs to the PNP/UDP phosphorylase family. MtnN subfamily.

It carries out the reaction S-adenosyl-L-homocysteine + H2O = S-(5-deoxy-D-ribos-5-yl)-L-homocysteine + adenine. The catalysed reaction is S-methyl-5'-thioadenosine + H2O = 5-(methylsulfanyl)-D-ribose + adenine. The enzyme catalyses 5'-deoxyadenosine + H2O = 5-deoxy-D-ribose + adenine. The protein operates within amino-acid biosynthesis; L-methionine biosynthesis via salvage pathway; S-methyl-5-thio-alpha-D-ribose 1-phosphate from S-methyl-5'-thioadenosine (hydrolase route): step 1/2. Catalyzes the irreversible cleavage of the glycosidic bond in both 5'-methylthioadenosine (MTA) and S-adenosylhomocysteine (SAH/AdoHcy) to adenine and the corresponding thioribose, 5'-methylthioribose and S-ribosylhomocysteine, respectively. Also cleaves 5'-deoxyadenosine, a toxic by-product of radical S-adenosylmethionine (SAM) enzymes, into 5-deoxyribose and adenine. In Vibrio vulnificus (strain CMCP6), this protein is 5'-methylthioadenosine/S-adenosylhomocysteine nucleosidase.